Here is a 274-residue protein sequence, read N- to C-terminus: Hydroxyacylglutathione hydrolase, cytoplasmic isozyme (274 aa).

6 residues coordinate Zn(2+): H59, H61, D63, H64, H121, and D144. Substrate contacts are provided by residues R153 and 188 to 190 (HEY). H188 contacts Zn(2+). Residue S257 is modified to Phosphoserine. 268–271 (RAMK) serves as a coordination point for substrate.

This sequence belongs to the metallo-beta-lactamase superfamily. Glyoxalase II family. Requires Zn(2+) as cofactor.

The protein localises to the cytoplasm. The enzyme catalyses an S-(2-hydroxyacyl)glutathione + H2O = a 2-hydroxy carboxylate + glutathione + H(+). The catalysed reaction is (R)-S-lactoylglutathione + H2O = (R)-lactate + glutathione + H(+). It participates in secondary metabolite metabolism; methylglyoxal degradation; (R)-lactate from methylglyoxal: step 2/2. With respect to regulation, inhibited by various thiol compounds such as glutathione and coenzyme A. Its function is as follows. Thiolesterase that catalyzes the hydrolysis of S-D-lactoylglutathione to form glutathione and D-lactic acid. Involved in the metabolism of methylglyoxal, a toxic compound for yeast proliferation, by converting methylglyoxal to lactate via S-D-lactoylglutathione by sequential enzyme reactions catalyzed by glyoxalase I and glyoxalase II. This Saccharomyces cerevisiae (strain ATCC 204508 / S288c) (Baker's yeast) protein is Hydroxyacylglutathione hydrolase, cytoplasmic isozyme.